The sequence spans 838 residues: Valine--tRNA ligase (838 aa).

The short motif at proline 46–histidine 56 is the 'HIGH' region element. The short motif at lysine 514–serine 518 is the 'KMSKS' region element. Residue lysine 517 participates in ATP binding. Residues valine 768–glutamate 838 adopt a coiled-coil conformation.

It belongs to the class-I aminoacyl-tRNA synthetase family. ValS type 1 subfamily. In terms of assembly, monomer.

The protein localises to the cytoplasm. It carries out the reaction tRNA(Val) + L-valine + ATP = L-valyl-tRNA(Val) + AMP + diphosphate. Catalyzes the attachment of valine to tRNA(Val). As ValRS can inadvertently accommodate and process structurally similar amino acids such as threonine, to avoid such errors, it has a 'posttransfer' editing activity that hydrolyzes mischarged Thr-tRNA(Val) in a tRNA-dependent manner. The polypeptide is Valine--tRNA ligase (Mycoplasma pneumoniae (strain ATCC 29342 / M129 / Subtype 1) (Mycoplasmoides pneumoniae)).